The primary structure comprises 176 residues: Ribosome maturation factor RimM (176 aa).

Residues 101 to 173 enclose the PRC barrel domain; the sequence is EGEYYHYRLI…RMVVDLPEGL (73 aa).

This sequence belongs to the RimM family. In terms of assembly, binds ribosomal protein uS19.

The protein resides in the cytoplasm. An accessory protein needed during the final step in the assembly of 30S ribosomal subunit, possibly for assembly of the head region. Essential for efficient processing of 16S rRNA. May be needed both before and after RbfA during the maturation of 16S rRNA. It has affinity for free ribosomal 30S subunits but not for 70S ribosomes. The sequence is that of Ribosome maturation factor RimM from Syntrophobacter fumaroxidans (strain DSM 10017 / MPOB).